The following is an 85-amino-acid chain: Large ribosomal subunit protein bL31B (85 aa).

This sequence belongs to the bacterial ribosomal protein bL31 family. Type B subfamily. In terms of assembly, part of the 50S ribosomal subunit.

The protein is Large ribosomal subunit protein bL31B of Micrococcus luteus (strain ATCC 4698 / DSM 20030 / JCM 1464 / CCM 169 / CCUG 5858 / IAM 1056 / NBRC 3333 / NCIMB 9278 / NCTC 2665 / VKM Ac-2230) (Micrococcus lysodeikticus).